The primary structure comprises 131 residues: Profilin-11 (131 aa).

Cysteines 13 and 115 form a disulfide. The short motif at 81-97 (AVIRGKKGSGGITVKKT) is the Involved in PIP2 interaction element. T111 is subject to Phosphothreonine.

This sequence belongs to the profilin family. Occurs in many kinds of cells as a complex with monomeric actin in a 1:1 ratio. In terms of processing, phosphorylated by MAP kinases.

It localises to the cytoplasm. Its subcellular location is the cytoskeleton. Binds to actin and affects the structure of the cytoskeleton. At high concentrations, profilin prevents the polymerization of actin, whereas it enhances it at low concentrations. This chain is Profilin-11, found in Zea mays (Maize).